The primary structure comprises 356 residues: L-amino acid-D/L-Glu epimerase (356 aa).

Substrate contacts are provided by residues Arg25, Ser136, and 161–163; that span reads KVK. Position 191 (Asp191) interacts with Mg(2+). Asn193 contacts substrate. Mg(2+) is bound by residues Glu219 and Asp244. Residues Lys268, 296 to 298, and 320 to 322 contribute to the substrate site; these read CMM and DLD.

It belongs to the mandelate racemase/muconate lactonizing enzyme family. Mg(2+) is required as a cofactor.

In terms of biological role, catalyzes the epimerization of dipeptides with L-Glu in the second position. Has epimerase activity with L-Ala-L-Glu, L-Pro-L-Glu, L-Val-L-Glu, L-Thr-L-Glu and L-Met-L-Glu (in vitro). The chain is L-amino acid-D/L-Glu epimerase from Francisella philomiragia subsp. philomiragia (strain ATCC 25017 / CCUG 19701 / FSC 153 / O#319-036).